We begin with the raw amino-acid sequence, 126 residues long: Protein ApaG (126 aa).

Residues 2–126 enclose the ApaG domain; the sequence is SDPRYQIDVS…FRLAVPGALH (125 aa).

In Pseudomonas putida (strain ATCC 700007 / DSM 6899 / JCM 31910 / BCRC 17059 / LMG 24140 / F1), this protein is Protein ApaG.